A 215-amino-acid polypeptide reads, in one-letter code: Chloramphenicol acetyltransferase (215 aa).

The Proton acceptor role is filled by H189.

It belongs to the chloramphenicol acetyltransferase family. As to quaternary structure, homotrimer.

The catalysed reaction is chloramphenicol + acetyl-CoA = chloramphenicol 3-acetate + CoA. Its function is as follows. This enzyme is an effector of chloramphenicol resistance in bacteria. In Staphylococcus aureus, this protein is Chloramphenicol acetyltransferase (cat).